Here is a 95-residue protein sequence, read N- to C-terminus: Opiscorpine-4 (95 aa).

The N-terminal stretch at 1–19 is a signal peptide; sequence MNNKLTALIFLGLLAIASC. The BetaSPN-type CS-alpha/beta domain occupies 55-95; it reads EFMCVANIDMTKSCDTHCQKASGEKGYCHGTKCKCGVPLSY. Cystine bridges form between cysteine 58–cysteine 82, cysteine 68–cysteine 87, and cysteine 72–cysteine 89.

It belongs to the long chain scorpion toxin family. Class 3 subfamily. Expressed by the venom gland.

The protein localises to the secreted. Has antimicrobial activity against yeasts and bacteria. The polypeptide is Opiscorpine-4 (Opistophthalmus carinatus (African yellow leg scorpion)).